Consider the following 113-residue polypeptide: Large ribosomal subunit protein uL22 (113 aa).

Belongs to the universal ribosomal protein uL22 family. In terms of assembly, part of the 50S ribosomal subunit.

Functionally, this protein binds specifically to 23S rRNA; its binding is stimulated by other ribosomal proteins, e.g. L4, L17, and L20. It is important during the early stages of 50S assembly. It makes multiple contacts with different domains of the 23S rRNA in the assembled 50S subunit and ribosome. Its function is as follows. The globular domain of the protein is located near the polypeptide exit tunnel on the outside of the subunit, while an extended beta-hairpin is found that lines the wall of the exit tunnel in the center of the 70S ribosome. This Mycoplasmopsis synoviae (strain 53) (Mycoplasma synoviae) protein is Large ribosomal subunit protein uL22.